Reading from the N-terminus, the 117-residue chain is Galanin peptides (117 aa).

Positions 1 to 19 (MQRCAGFLFLSLILCAALS) are cleaved as a signal peptide. Residues 20–30 (ETFGLVLSAKE) constitute a propeptide that is removed on maturation. Thr-61 bears the Threonine amide mark.

It belongs to the galanin family.

Its subcellular location is the secreted. Its function is as follows. Endocrine hormone of the central and peripheral nervous systems that binds and activates the G protein-coupled receptors GALR1, GALR2, and GALR3. This small neuropeptide may regulate diverse physiologic functions including contraction of smooth muscle of the gastrointestinal and genitourinary tract, growth hormone and insulin release and adrenal secretion. The sequence is that of Galanin peptides (GAL) from Coturnix japonica (Japanese quail).